The primary structure comprises 985 residues: Rho guanine nucleotide exchange factor 2 (985 aa).

The disordered stretch occupies residues 1–32 (MSRIESLTRARIDRSKEQATKTREKEKMKEAK). The Phorbol-ester/DAG-type zinc finger occupies 39–86 (GHLFTTISVSGMTMCYACNKSITAKEALICPTCNVTIHNRCKDTLANC). Phosphoserine occurs at positions 109, 122, 129, 133, and 137. The tract at residues 131-161 (RQSLLGSRRGLSSLSLAKSVSTTNIAGHFND) is interaction with DYNLT1. S143 is subject to Phosphoserine; by PAK4. Residues S151, S163, S172, S174, and S177 each carry the phosphoserine modification. The region spanning 236 to 433 (KKQDVIYELI…KELLSNVDQD (198 aa)) is the DH domain. The residue at position 354 (K354) is an N6-acetyllysine. One can recognise a PH domain in the interval 473–572 (KLIHDGCLLW…WIRVIQQSVR (100 aa)). A coiled-coil region spans residues 591–615 (LRRIKTKLQQKNQALVELLQMNVEL). Phosphoserine occurs at positions 646 and 649. Residue T680 is modified to Phosphothreonine; by MAPK1 or MAPK3. Phosphoserine is present on residues S692, S710, and S781. Phosphothreonine is present on T795. The stretch at 797–866 (EKQATELALL…RQLAALGQNE (70 aa)) forms a coiled coil. A Phosphoserine modification is found at S885. Disordered regions lie at residues 890–909 (DALY…DRLD) and 918–985 (HRPF…ASES). A Phosphotyrosine modification is found at Y893. At S895 the chain carries Phosphoserine; by PAK4. A compositionally biased stretch (basic and acidic residues) spans 919-938 (RPFDDREAQELGSPEDRLQD). S931, S939, and S940 each carry phosphoserine. Acidic residues predominate over residues 940–949 (SDPDTCSEEE). T944 carries the post-translational modification Phosphothreonine. Phosphoserine occurs at positions 946, 951, 952, 955, and 959.

As to quaternary structure, found in a complex composed at least of ARHGEF2, NOD2 and RIPK2. Interacts with RIPK2; the interaction mediates tyrosine phosphorylation of RIPK2 by Src kinase CSK. Interacts with RIPK1 and RIPK3. Interacts with YWHAZ/14-3-3 zeta; when phosphorylated at Ser-885. Interacts with the kinases PAK4, AURKA and MAPK1. Interacts with RHOA and RAC1. Interacts with NOD1. Interacts (via the N- terminal zinc finger) with CAPN6 (via domain II). Interacts with DYNLT1. Phosphorylation of Ser-885 by PAK1 induces binding to protein YWHAZ, promoting its relocation to microtubules and the inhibition of its activity. Phosphorylated by AURKA and CDK1 during mitosis, which negatively regulates its activity. Phosphorylation by MAPK1 or MAPK3 increases nucleotide exchange activity. Phosphorylation by PAK4 releases GEF-H1 from the microtubules. Phosphorylated on serine, threonine and tyrosine residues in a RIPK2-dependent manner.

Its subcellular location is the cytoplasm. The protein resides in the cytoskeleton. The protein localises to the cell junction. It is found in the tight junction. It localises to the golgi apparatus. Its subcellular location is the spindle. The protein resides in the cytoplasmic vesicle. Its function is as follows. Activates Rho-GTPases by promoting the exchange of GDP for GTP. May be involved in epithelial barrier permeability, cell motility and polarization, dendritic spine morphology, antigen presentation, leukemic cell differentiation, cell cycle regulation, innate immune response, and cancer. Binds Rac-GTPases, but does not seem to promote nucleotide exchange activity toward Rac-GTPases. May stimulate instead the cortical activity of Rac. Inactive toward CDC42, TC10, or Ras-GTPases. Forms an intracellular sensing system along with NOD1 for the detection of microbial effectors during cell invasion by pathogens. Involved in innate immune signaling transduction pathway promoting cytokine IL6/interleukin-6 and TNF-alpha secretion in macrophage upon stimulation by bacterial peptidoglycans; acts as a signaling intermediate between NOD2 receptor and RIPK2 kinase. Contributes to the tyrosine phosphorylation of RIPK2 through Src tyrosine kinase leading to NF-kappaB activation by NOD2. Overexpression activates Rho-, but not Rac-GTPases, and increases paracellular permeability. Involved in neuronal progenitor cell division and differentiation. Involved in the migration of precerebellar neurons. This chain is Rho guanine nucleotide exchange factor 2 (Arhgef2), found in Rattus norvegicus (Rat).